A 61-amino-acid chain; its full sequence is Small ribosomal subunit protein uS14 (61 aa).

Positions 24, 27, 40, and 43 each coordinate Zn(2+).

The protein belongs to the universal ribosomal protein uS14 family. Zinc-binding uS14 subfamily. As to quaternary structure, part of the 30S ribosomal subunit. Contacts proteins S3 and S10. Zn(2+) serves as cofactor.

In terms of biological role, binds 16S rRNA, required for the assembly of 30S particles and may also be responsible for determining the conformation of the 16S rRNA at the A site. This chain is Small ribosomal subunit protein uS14, found in Herpetosiphon aurantiacus (strain ATCC 23779 / DSM 785 / 114-95).